The chain runs to 539 residues: Membrane protein insertase YidC (539 aa).

Residues 7 to 27 form a helical membrane-spanning segment; sequence IIAIALSFVVLVGWSYLADHM. The interval 32–64 is disordered; it reads QPAPQAQQEETAPSASQAAPQSASQAAAPAPRA. Helical transmembrane passes span 347-367, 418-438, and 498-518; these read YVGN…LVFW, GGCL…QALL, and IMMF…SGLV.

It belongs to the OXA1/ALB3/YidC family. Type 1 subfamily. Interacts with the Sec translocase complex via SecD. Specifically interacts with transmembrane segments of nascent integral membrane proteins during membrane integration.

It localises to the cell inner membrane. Functionally, required for the insertion and/or proper folding and/or complex formation of integral membrane proteins into the membrane. Involved in integration of membrane proteins that insert both dependently and independently of the Sec translocase complex, as well as at least some lipoproteins. Aids folding of multispanning membrane proteins. This chain is Membrane protein insertase YidC, found in Nitratidesulfovibrio vulgaris (strain DSM 19637 / Miyazaki F) (Desulfovibrio vulgaris).